A 576-amino-acid chain; its full sequence is TOX high mobility group box family member 3 (576 aa).

3 disordered regions span residues 189 to 258 (NLGG…PQKP), 422 to 443 (TMVGSAPSTQVSPSVQTQQHQM), and 519 to 563 (LQHM…QIQS). Positions 204–215 (ASKSATPSPSSS) are enriched in low complexity. The span at 223 to 239 (EANRAIGEKRAAPDSGK) shows a compositional bias: basic and acidic residues. A compositionally biased stretch (basic residues) spans 240 to 250 (KPKTPKKKKKK). A DNA-binding region (HMG box) is located at residues 255-323 (PQKPVSAYAL…EYLKALAAYR (69 aa)). Residues 428–443 (PSTQVSPSVQTQQHQM) are compositionally biased toward low complexity. A compositionally biased stretch (polar residues) spans 528–542 (PSPRQHSPVASQITS). Positions 549–563 (SPQPASQQHQSQIQS) are enriched in low complexity.

Homodimer. Interacts with CREB1; the interaction is not depolarization dependent. Interacts with CREBBP (via C-terminus). Interacts (via HGM box) with CITED1 (via C-terminus); the interaction increases estrogen-response element (ERE)-dependent transcription and protection against cell death. Interacts with CREB1 (phosphorylated form). As to expression, expressed mainly in epithelial cells. Expressed in the central nervous system (CNS), in the ileum and within the brain in the frontal and occipital lobe.

It is found in the nucleus. Its function is as follows. Transcriptional coactivator of the p300/CBP-mediated transcription complex. Activates transactivation through cAMP response element (CRE) sites. Protects against cell death by inducing antiapoptotic and repressing pro-apoptotic transcripts. Stimulates transcription from the estrogen-responsive or BCL-2 promoters. Required for depolarization-induced transcription activation of the C-FOS promoter in neurons. Associates with chromatin to the estrogen-responsive C3 promoter region. This is TOX high mobility group box family member 3 (TOX3) from Homo sapiens (Human).